Here is a 32-residue protein sequence, read N- to C-terminus: Cytochrome b6-f complex subunit 7 (32 aa).

The helical transmembrane segment at 9–27 (AAVFWVLIPVGLAGGALLL) threads the bilayer.

The protein belongs to the PetM family. The 4 large subunits of the cytochrome b6-f complex are cytochrome b6, subunit IV (17 kDa polypeptide, PetD), cytochrome f and the Rieske protein, while the 4 small subunits are PetG, PetL, PetM and PetN. The complex functions as a dimer.

The protein resides in the cellular thylakoid membrane. Component of the cytochrome b6-f complex, which mediates electron transfer between photosystem II (PSII) and photosystem I (PSI), cyclic electron flow around PSI, and state transitions. This is Cytochrome b6-f complex subunit 7 from Prochlorococcus marinus (strain MIT 9303).